We begin with the raw amino-acid sequence, 56 residues long: Cytochrome b-c1 complex subunit 10 (56 aa).

Topologically, residues 1–12 (MLTRFLGPRYRQ) are mitochondrial matrix. Residues 13–35 (LARNWVPTASLWGAVGAVGLVWA) traverse the membrane as a helical segment. Residues 36–56 (TDWRLILDWVPYINGKFKKDD) lie on the Mitochondrial intermembrane side of the membrane.

This sequence belongs to the UQCR11/QCR10 family. As to quaternary structure, component of the ubiquinol-cytochrome c oxidoreductase (cytochrome b-c1 complex, complex III, CIII), a multisubunit enzyme composed of 11 subunits. The complex is composed of 3 respiratory subunits cytochrome b, cytochrome c1 and Rieske protein UQCRFS1, 2 core protein subunits UQCRC1/QCR1 and UQCRC2/QCR2, and 6 low-molecular weight protein subunits UQCRH/QCR6, UQCRB/QCR7, UQCRQ/QCR8, UQCR10/QCR9, UQCR11/QCR10 and subunit 9, the cleavage product of Rieske protein UQCRFS1. The complex exists as an obligatory dimer and forms supercomplexes (SCs) in the inner mitochondrial membrane with NADH-ubiquinone oxidoreductase (complex I, CI) and cytochrome c oxidase (complex IV, CIV), resulting in different assemblies (supercomplex SCI(1)III(2)IV(1) and megacomplex MCI(2)III(2)IV(2)).

The protein localises to the mitochondrion inner membrane. In terms of biological role, component of the ubiquinol-cytochrome c oxidoreductase, a multisubunit transmembrane complex that is part of the mitochondrial electron transport chain which drives oxidative phosphorylation. The respiratory chain contains 3 multisubunit complexes succinate dehydrogenase (complex II, CII), ubiquinol-cytochrome c oxidoreductase (cytochrome b-c1 complex, complex III, CIII) and cytochrome c oxidase (complex IV, CIV), that cooperate to transfer electrons derived from NADH and succinate to molecular oxygen, creating an electrochemical gradient over the inner membrane that drives transmembrane transport and the ATP synthase. The cytochrome b-c1 complex catalyzes electron transfer from ubiquinol to cytochrome c, linking this redox reaction to translocation of protons across the mitochondrial inner membrane, with protons being carried across the membrane as hydrogens on the quinol. In the process called Q cycle, 2 protons are consumed from the matrix, 4 protons are released into the intermembrane space and 2 electrons are passed to cytochrome c. QCR10 has a role in CIII assembly and RIP1 stability. The sequence is that of Cytochrome b-c1 complex subunit 10 (UQCR11) from Bos taurus (Bovine).